Consider the following 75-residue polypeptide: uncharacterized protein (75 aa).

Polar residues predominate over residues 19–38; sequence FHNTAPSKTNVNVPRANKSQ. Residues 19 to 42 are disordered; that stretch reads FHNTAPSKTNVNVPRANKSQSKGK. Residues 47 to 66 traverse the membrane as a helical segment; it reads LLVLVGTLALVTSVISVNYQ.

It localises to the membrane. This is an uncharacterized protein from Saccharomyces cerevisiae (strain ATCC 204508 / S288c) (Baker's yeast).